Consider the following 654-residue polypeptide: tRNA 5-methylaminomethyl-2-thiouridine biosynthesis bifunctional protein MnmC (654 aa).

The tract at residues 1–236 (MPTLLQHAQI…KWEVMSGAYV (236 aa)) is tRNA (mnm(5)s(2)U34)-methyltransferase. Positions 262–654 (IGAGLAGSSS…FGLRRLIRGK (393 aa)) are FAD-dependent cmnm(5)s(2)U34 oxidoreductase.

It in the N-terminal section; belongs to the methyltransferase superfamily. tRNA (mnm(5)s(2)U34)-methyltransferase family. The protein in the C-terminal section; belongs to the DAO family. The cofactor is FAD.

The protein resides in the cytoplasm. The enzyme catalyses 5-aminomethyl-2-thiouridine(34) in tRNA + S-adenosyl-L-methionine = 5-methylaminomethyl-2-thiouridine(34) in tRNA + S-adenosyl-L-homocysteine + H(+). Its function is as follows. Catalyzes the last two steps in the biosynthesis of 5-methylaminomethyl-2-thiouridine (mnm(5)s(2)U) at the wobble position (U34) in tRNA. Catalyzes the FAD-dependent demodification of cmnm(5)s(2)U34 to nm(5)s(2)U34, followed by the transfer of a methyl group from S-adenosyl-L-methionine to nm(5)s(2)U34, to form mnm(5)s(2)U34. This chain is tRNA 5-methylaminomethyl-2-thiouridine biosynthesis bifunctional protein MnmC, found in Pseudomonas putida (strain ATCC 700007 / DSM 6899 / JCM 31910 / BCRC 17059 / LMG 24140 / F1).